A 506-amino-acid chain; its full sequence is Arylsulfatase A (506 aa).

Residues 1–17 (MALGTLFLALAAGLSTA) form the signal peptide. Ca(2+) is bound by residues Asp28, Asp29, and Cys68. The active-site Nucleophile is the Cys68. Cys68 carries the 3-oxoalanine (Cys) modification. Lys122 provides a ligand contact to substrate. Residue His124 is part of the active site. Ser149 provides a ligand contact to substrate. Cystine bridges form between Cys155–Cys171 and Cys160–Cys167. N-linked (GlcNAc...) asparagine glycosylation is present at Asn157. N-linked (GlcNAc...) asparagine glycosylation occurs at Asn183. Position 228 (His228) interacts with substrate. Positions 280 and 281 each coordinate Ca(2+). 4 cysteine pairs are disulfide-bonded: Cys299/Cys413, Cys487/Cys499, Cys488/Cys501, and Cys492/Cys498. Lys301 lines the substrate pocket. An N-linked (GlcNAc...) asparagine glycan is attached at Asn349.

Belongs to the sulfatase family. As to quaternary structure, homodimer at neutral pH and homooctamer at acidic pH. Exists both as a single chain of 58 kDa (component A) or as a chain of 50 kDa (component B) linked by disulfide bond(s) to a 7 kDa chain (component C). Interacts with SUMF1. Ca(2+) serves as cofactor. The conversion to 3-oxoalanine (also known as C-formylglycine, FGly), of a serine or cysteine residue in prokaryotes and of a cysteine residue in eukaryotes, is critical for catalytic activity. This post-translational modification is severely defective in multiple sulfatase deficiency (MSD).

The protein localises to the endoplasmic reticulum. Its subcellular location is the lysosome. The catalysed reaction is an N-acyl-1-beta-D-(3-O-sulfo)-galactosyl-sphing-4-enine + H2O = a beta-D-galactosyl-(1&lt;-&gt;1')-N-acylsphing-4-enine + sulfate + H(+). Functionally, hydrolyzes cerebroside sulfate. This chain is Arylsulfatase A (Arsa), found in Mus musculus (Mouse).